The chain runs to 307 residues: Porphobilinogen deaminase (307 aa).

Cys-239 bears the S-(dipyrrolylmethanemethyl)cysteine mark.

This sequence belongs to the HMBS family. In terms of assembly, monomer. It depends on dipyrromethane as a cofactor.

The enzyme catalyses 4 porphobilinogen + H2O = hydroxymethylbilane + 4 NH4(+). The protein operates within porphyrin-containing compound metabolism; protoporphyrin-IX biosynthesis; coproporphyrinogen-III from 5-aminolevulinate: step 2/4. Functionally, tetrapolymerization of the monopyrrole PBG into the hydroxymethylbilane pre-uroporphyrinogen in several discrete steps. This chain is Porphobilinogen deaminase, found in Campylobacter jejuni subsp. jejuni serotype O:23/36 (strain 81-176).